A 1107-amino-acid polypeptide reads, in one-letter code: Protein translocase subunit SecA (1107 aa).

Residues Gln169, 187–191, and Asp688 each bind ATP; that span reads GEGKT. The span at 1036–1066 shows a compositional bias: basic and acidic residues; the sequence is RHAAEQRTDMSKYRTQKDDIEAQQKAQRDAA. Residues 1036–1107 are disordered; the sequence is RHAAEQRTDM…KFKQCHGRNL (72 aa). 4 residues coordinate Zn(2+): Cys1091, Cys1093, Cys1102, and His1103. Basic residues predominate over residues 1097 to 1107; that stretch reads KKFKQCHGRNL.

This sequence belongs to the SecA family. As to quaternary structure, monomer and homodimer. Part of the essential Sec protein translocation apparatus which comprises SecA, SecYEG and auxiliary proteins SecDF. Other proteins may also be involved. Requires Zn(2+) as cofactor.

It is found in the cell inner membrane. It localises to the cytoplasm. The catalysed reaction is ATP + H2O + cellular proteinSide 1 = ADP + phosphate + cellular proteinSide 2.. Part of the Sec protein translocase complex. Interacts with the SecYEG preprotein conducting channel. Has a central role in coupling the hydrolysis of ATP to the transfer of proteins into and across the cell membrane, serving as an ATP-driven molecular motor driving the stepwise translocation of polypeptide chains across the membrane. This chain is Protein translocase subunit SecA, found in Porphyromonas gingivalis (strain ATCC BAA-308 / W83).